The primary structure comprises 219 residues: Octanoyltransferase (219 aa).

A BPL/LPL catalytic domain is found at 34 to 209 (SESPDELWIV…TFSQLLGYQH (176 aa)). Substrate-binding positions include 73 to 80 (RGGQVTYH), 140 to 142 (SLG), and 153 to 155 (GLA). Catalysis depends on Cys-171, which acts as the Acyl-thioester intermediate.

This sequence belongs to the LipB family.

It localises to the cytoplasm. The catalysed reaction is octanoyl-[ACP] + L-lysyl-[protein] = N(6)-octanoyl-L-lysyl-[protein] + holo-[ACP] + H(+). It participates in protein modification; protein lipoylation via endogenous pathway; protein N(6)-(lipoyl)lysine from octanoyl-[acyl-carrier-protein]: step 1/2. In terms of biological role, catalyzes the transfer of endogenously produced octanoic acid from octanoyl-acyl-carrier-protein onto the lipoyl domains of lipoate-dependent enzymes. Lipoyl-ACP can also act as a substrate although octanoyl-ACP is likely to be the physiological substrate. The sequence is that of Octanoyltransferase from Shewanella putrefaciens (strain CN-32 / ATCC BAA-453).